The following is a 965-amino-acid chain: PWWP domain-containing protein 4 (965 aa).

Residues 135 to 196 (VGDMVWGKVK…PAELIPFEPH (62 aa)) enclose the PWWP domain. Residues 437–455 (MNFTSSSGNIPGKKSSVSK) are compositionally biased toward polar residues. 4 disordered regions span residues 437–507 (MNFT…KSSL), 526–577 (VVKR…KSSQ), 649–708 (SAKT…SLAP), and 905–927 (LSSQDSEPKPVNNQVDHVEPPLD). 2 stretches are compositionally biased toward basic and acidic residues: residues 456–474 (LSRDDDKGLAQESDVRMGE) and 481–495 (DQEKFEPMKSLKQDE). A compositionally biased stretch (polar residues) spans 496-507 (TGTNSRSNKSSL). Positions 546–553 (KKKEYVSE) match the Nuclear localization signal motif. Basic and acidic residues predominate over residues 549–563 (EYVSELNRDTPDKRK). Over residues 657-676 (NEQSKAGRNRISSDSQQDVP) the composition is skewed to polar residues. Positions 691-702 (ASDKKTNQDATK) are enriched in basic and acidic residues. A compositionally biased stretch (polar residues) spans 905–919 (LSSQDSEPKPVNNQV).

Belongs to the PDP family. In terms of assembly, component of the PRC2 (polycomb repressive complex 2) complex which regulates histone methylation on histone H3K27.

It is found in the nucleus. Functionally, may influence gene expression by regulating the function of the PRC2 complex and modulating H3K27me3 level. The chain is PWWP domain-containing protein 4 from Arabidopsis thaliana (Mouse-ear cress).